A 940-amino-acid chain; its full sequence is Isoleucine--tRNA ligase (940 aa).

Positions 58–68 (PYANGSIHIGH) match the 'HIGH' region motif. Glu-564 contributes to the L-isoleucyl-5'-AMP binding site. A 'KMSKS' region motif is present at residues 605-609 (KMSKS). Position 608 (Lys-608) interacts with ATP. Zn(2+)-binding residues include Cys-903, Cys-906, Cys-923, and Cys-926.

This sequence belongs to the class-I aminoacyl-tRNA synthetase family. IleS type 1 subfamily. Monomer. Zn(2+) is required as a cofactor.

It is found in the cytoplasm. It carries out the reaction tRNA(Ile) + L-isoleucine + ATP = L-isoleucyl-tRNA(Ile) + AMP + diphosphate. Its function is as follows. Catalyzes the attachment of isoleucine to tRNA(Ile). As IleRS can inadvertently accommodate and process structurally similar amino acids such as valine, to avoid such errors it has two additional distinct tRNA(Ile)-dependent editing activities. One activity is designated as 'pretransfer' editing and involves the hydrolysis of activated Val-AMP. The other activity is designated 'posttransfer' editing and involves deacylation of mischarged Val-tRNA(Ile). The sequence is that of Isoleucine--tRNA ligase from Shewanella oneidensis (strain ATCC 700550 / JCM 31522 / CIP 106686 / LMG 19005 / NCIMB 14063 / MR-1).